The chain runs to 672 residues: Acetoacetyl-CoA synthetase (672 aa).

This sequence belongs to the ATP-dependent AMP-binding enzyme family.

It localises to the cytoplasm. It is found in the cytosol. The catalysed reaction is acetoacetate + ATP + CoA = acetoacetyl-CoA + AMP + diphosphate. Its function is as follows. Converts acetoacetate to acetoacetyl-CoA in the cytosol. Ketone body-utilizing enzyme, responsible for the synthesis of cholesterol and fatty acids. The chain is Acetoacetyl-CoA synthetase (Aacs) from Mus musculus (Mouse).